The sequence spans 204 residues: Large ribosomal subunit protein eL15y (204 aa).

Belongs to the eukaryotic ribosomal protein eL15 family.

This chain is Large ribosomal subunit protein eL15y (SB62), found in Picea mariana (Black spruce).